A 514-amino-acid chain; its full sequence is Protein farnesyltransferase subunit beta (514 aa).

Residues 1–13 (MRHHTKNLRRRAI) show a composition bias toward basic residues. The disordered stretch occupies residues 1 to 56 (MRHHTKNLRRRAIFLRTTPRGNMDSSSSVATSTSSSSNHRLVRSSEGSPSAGGDDI). The span at 25–39 (SSSSVATSTSSSSNH) shows a compositional bias: low complexity. 5 PFTB repeats span residues 180 to 221 (AESL…AVVG), 231 to 272 (RRAL…SLLN), 293 to 334 (FTGL…SLLG), 346 to 388 (IERL…PLIE), and 410 to 454 (REGL…SSAQ). (2E,6E)-farnesyl diphosphate-binding positions include 319–322 (HGAY) and 367–370 (RTNK). Positions 373 and 375 each coordinate Zn(2+). Position 376–379 (376–379 (YSHW)) interacts with (2E,6E)-farnesyl diphosphate. Histidine 442 is a binding site for Zn(2+).

This sequence belongs to the protein prenyltransferase subunit beta family. In terms of assembly, heterodimer of an alpha and a beta subunit. Interacts with RAS1 and RAS2. It depends on Zn(2+) as a cofactor. In terms of tissue distribution, highly expressed in mycelium, conidium, conidial germination, early formed appressorium and the late infection hypha.

It is found in the cytoplasm. It carries out the reaction L-cysteinyl-[protein] + (2E,6E)-farnesyl diphosphate = S-(2E,6E)-farnesyl-L-cysteinyl-[protein] + diphosphate. Its function is as follows. Catalyzes the transfer of a farnesyl moiety from farnesyl diphosphate to a cysteine at the fourth position from the C-terminus of several proteins having the C-terminal sequence Cys-aliphatic-aliphatic-X. The beta subunit is responsible for peptide-binding. This is Protein farnesyltransferase subunit beta (RAM1) from Pyricularia oryzae (strain 70-15 / ATCC MYA-4617 / FGSC 8958) (Rice blast fungus).